Here is a 140-residue protein sequence, read N- to C-terminus: Granulocyte-macrophage colony-stimulating factor (140 aa).

An N-terminal signal peptide occupies residues 1 to 17 (MWLQNLLLLGTVVCSIC). Serine 24 carries an O-linked (GalNAc...) serine glycan. Residue threonine 27 is glycosylated (O-linked (GalNAc...) threonine). Residues asparagine 45, asparagine 55, and asparagine 87 are each glycosylated (N-linked (GlcNAc...) asparagine). 2 cysteine pairs are disulfide-bonded: cysteine 72–cysteine 114 and cysteine 106–cysteine 139.

It belongs to the GM-CSF family. In terms of assembly, monomer. The signaling GM-CSF receptor complex is a dodecamer of two head-to-head hexamers of two alpha, two beta, and two ligand subunits.

The protein localises to the secreted. Its function is as follows. Cytokine that stimulates the growth and differentiation of hematopoietic precursor cells from various lineages, including granulocytes, macrophages, eosinophils and erythrocytes. The sequence is that of Granulocyte-macrophage colony-stimulating factor (CSF2) from Cavia porcellus (Guinea pig).